The sequence spans 166 residues: NAD(P)H-quinone oxidoreductase subunit I, chloroplastic (166 aa).

2 consecutive 4Fe-4S ferredoxin-type domains span residues 55–84 and 95–124; these read GRIHFEFDKCIACEVCVRVCPIDLPVVDWK and LNYSIDFGICIFCGNCVEYCPTNCLSMTEE. Cys64, Cys67, Cys70, Cys74, Cys104, Cys107, Cys110, and Cys114 together coordinate [4Fe-4S] cluster.

This sequence belongs to the complex I 23 kDa subunit family. In terms of assembly, NDH is composed of at least 16 different subunits, 5 of which are encoded in the nucleus. [4Fe-4S] cluster is required as a cofactor.

The protein localises to the plastid. It is found in the chloroplast thylakoid membrane. It carries out the reaction a plastoquinone + NADH + (n+1) H(+)(in) = a plastoquinol + NAD(+) + n H(+)(out). The enzyme catalyses a plastoquinone + NADPH + (n+1) H(+)(in) = a plastoquinol + NADP(+) + n H(+)(out). NDH shuttles electrons from NAD(P)H:plastoquinone, via FMN and iron-sulfur (Fe-S) centers, to quinones in the photosynthetic chain and possibly in a chloroplast respiratory chain. The immediate electron acceptor for the enzyme in this species is believed to be plastoquinone. Couples the redox reaction to proton translocation, and thus conserves the redox energy in a proton gradient. The sequence is that of NAD(P)H-quinone oxidoreductase subunit I, chloroplastic from Oteiza scandens (Climbing oteiza).